A 541-amino-acid chain; its full sequence is Glucose-6-phosphate isomerase (541 aa).

The active-site Proton donor is the Glu-353. Residues His-384 and Lys-504 contribute to the active site.

Belongs to the GPI family.

It localises to the cytoplasm. The enzyme catalyses alpha-D-glucose 6-phosphate = beta-D-fructose 6-phosphate. It functions in the pathway carbohydrate biosynthesis; gluconeogenesis. It participates in carbohydrate degradation; glycolysis; D-glyceraldehyde 3-phosphate and glycerone phosphate from D-glucose: step 2/4. Functionally, catalyzes the reversible isomerization of glucose-6-phosphate to fructose-6-phosphate. The sequence is that of Glucose-6-phosphate isomerase from Deinococcus radiodurans (strain ATCC 13939 / DSM 20539 / JCM 16871 / CCUG 27074 / LMG 4051 / NBRC 15346 / NCIMB 9279 / VKM B-1422 / R1).